Here is a 1531-residue protein sequence, read N- to C-terminus: Multidrug resistance-associated protein 1 (1531 aa).

The Extracellular portion of the chain corresponds to 1–33 (MALRGFCSADGSDPLWDWNVTWNTSNPDFTKCF). N-linked (GlcNAc...) asparagine glycosylation is found at Asn19 and Asn23. A helical transmembrane segment spans residues 34–54 (QNTVLVWVPCFYLWACFPFYF). The Cytoplasmic portion of the chain corresponds to 55–74 (LYLSRHDRGYIQMTPLNKTK). The chain crosses the membrane as a helical span at residues 75 to 95 (TALGFLLWIVCWADLFYSFWE). At 96–100 (RSRGI) the chain is on the extracellular side. A helical membrane pass occupies residues 101–121 (FLAPVFLVSPTLLGITMLLAT). The Cytoplasmic portion of the chain corresponds to 122 to 133 (FLIQLERRKGVQ). The chain crosses the membrane as a helical span at residues 134–154 (SSGIMLTFWLVALVCALAILR). Over 155-172 (SKIMTALKEDAQVDLFRD) the chain is Extracellular. Residues 173-193 (ITFYVYFSLLLIQLVLSCFSD) form a helical membrane-spanning segment. Residues 194–316 (RSPLFSETIH…KEWNPSLFKV (123 aa)) are Cytoplasmic-facing. Tyr277 bears the Phosphotyrosine mark. Ser289 carries the post-translational modification Phosphoserine. The helical transmembrane segment at 317–337 (LYKTFGPYFLMSFFFKAIHDL) threads the bilayer. The ABC transmembrane type-1 1 domain occupies 325–608 (FLMSFFFKAI…LPMVISSIVQ (284 aa)). Residues 338-363 (MMFSGPQILKLLIKFVNDTKAPDWQG) are Extracellular-facing. The helical transmembrane segment at 364 to 384 (YFYTVLLFVTACLQTLVLHQY) threads the bilayer. Residues 385 to 440 (FHICFVSGMRIKTAVIGAVYRKALVITNSARKSSTVGEIVNLMSVDAQRFMDLATY) lie on the Cytoplasmic side of the membrane. Residues 441–461 (INMIWSAPLQVILALYLLWLN) traverse the membrane as a helical segment. Residues 462–464 (LGP) lie on the Extracellular side of the membrane. Residues 465–485 (SVLAGVAVMVLMVPVNAVMAM) form a helical membrane-spanning segment. The Cytoplasmic portion of the chain corresponds to 486-547 (KTKTYQVAHM…VLKKSAYLSA (62 aa)). Lys503 is modified (N6-succinyllysine). The helical transmembrane segment at 548–568 (VGTFTWVCTPFLVALCTFAVY) threads the bilayer. Topologically, residues 569-590 (VTIDENNILDAQTAFVSLALFN) are extracellular. A helical transmembrane segment spans residues 591–611 (ILRFPLNILPMVISSIVQASV). Residues 612–967 (SLKRLRIFLS…VKLSVYWDYM (356 aa)) lie on the Cytoplasmic side of the membrane. The region spanning 644-868 (ITVRNATFTW…DGAFAEFLRT (225 aa)) is the ABC transporter 1 domain. Residues Trp653, 678 to 685 (GQVGCGKS), and Gln713 contribute to the ATP site. Phosphoserine occurs at positions 905, 915, and 930. The chain crosses the membrane as a helical span at residues 968–988 (KAIGLFISFLSIFLFMCNHVS). Residues 975 to 1256 (SFLSIFLFMC…LVRMSSEMET (282 aa)) enclose the ABC transmembrane type-1 2 domain. Over 989-1025 (ALASNYWLSLWTDDPIVNGTQEHTKVRLSVYGALGIS) the chain is Extracellular. Asn1006 carries an N-linked (GlcNAc...) asparagine glycan. A helical transmembrane segment spans residues 1026-1046 (QGIAVFGYSMAVSIGGILASR). The Cytoplasmic segment spans residues 1047–1089 (CLHVDLLHSILRSPMSFFERTPSGNLVNRFSKELDTVDSMIPE). A helical membrane pass occupies residues 1090–1110 (VIKMFMGSLFNVIGACIVILL). Position 1111 (Ala1111) is a topological domain, extracellular. A helical transmembrane segment spans residues 1112 to 1132 (TPIAAIIIPPLGLIYFFVQRF). Topologically, residues 1133-1203 (YVASSRQLKR…VANRWLAVRL (71 aa)) are cytoplasmic. A helical transmembrane segment spans residues 1204–1224 (ECVGNCIVLFAALFAVISRHS). Residues 1225–1226 (LS) are Extracellular-facing. The helical transmembrane segment at 1227–1247 (AGLVGLSVSYSLQVTTYLNWL) threads the bilayer. Residues 1248 to 1531 (VRMSSEMETN…YSMAKDAGLV (284 aa)) are Cytoplasmic-facing. One can recognise an ABC transporter 2 domain in the interval 1293-1527 (VEFRNYCLRY…RGLFYSMAKD (235 aa)). Residue 1327 to 1334 (GRTGAGKS) coordinates ATP.

Belongs to the ABC transporter superfamily. ABCC family. Conjugate transporter (TC 3.A.1.208) subfamily. As to quaternary structure, (Microbial infection) Interacts with human cytomegalovirus protein UL138; this interaction mediates MRP1 degradation via the lysosome. As to expression, lung, testis and peripheral blood mononuclear cells.

The protein localises to the cell membrane. It localises to the basolateral cell membrane. It carries out the reaction ATP + H2O + xenobioticSide 1 = ADP + phosphate + xenobioticSide 2.. The catalysed reaction is an S-substituted glutathione(in) + ATP + H2O = an S-substituted glutathione(out) + ADP + phosphate + H(+). It catalyses the reaction sphing-4-enine 1-phosphate(in) + ATP + H2O = sphing-4-enine 1-phosphate(out) + ADP + phosphate + H(+). The enzyme catalyses leukotriene C4(in) + ATP + H2O = leukotriene C4(out) + ADP + phosphate + H(+). It carries out the reaction 17beta-estradiol 17-O-(beta-D-glucuronate)(in) + ATP + H2O = 17beta-estradiol 17-O-(beta-D-glucuronate)(out) + ADP + phosphate + H(+). The catalysed reaction is daunorubicin(in) + ATP + H2O = daunorubicin(out) + ADP + phosphate + H(+). It catalyses the reaction vincristine(in) + ATP + H2O = vincristine(out) + ADP + phosphate + H(+). The enzyme catalyses 2',3'-cGAMP(in) + ATP + H2O = 2',3'-cGAMP(out) + ADP + phosphate + H(+). It carries out the reaction S-[(2E,6E,10E)-geranylgeranyl]-L-glutathione(in) + ATP + H2O = S-[(2E,6E,10E)-geranylgeranyl]-L-glutathione(out) + ADP + phosphate + H(+). The catalysed reaction is prostaglandin A2-S-(R)-glutathione(in) + ATP + H2O = prostaglandin A2-S-(R)-glutathione(out) + ADP + phosphate + H(+). It catalyses the reaction prostaglandin A2-S-(S)-glutathione(in) + ATP + H2O = prostaglandin A2-S-(S)-glutathione(out) + ADP + phosphate + H(+). Its activity is regulated as follows. MK 571 inhibits sphingosine 1-phosphate and leukotriene C4 export. Functionally, mediates export of organic anions and drugs from the cytoplasm. Mediates ATP-dependent transport of glutathione and glutathione conjugates, leukotriene C4, estradiol-17-beta-o-glucuronide, methotrexate, antiviral drugs and other xenobiotics. Confers resistance to anticancer drugs by decreasing accumulation of drug in cells, and by mediating ATP- and GSH-dependent drug export. Hydrolyzes ATP with low efficiency. Catalyzes the export of sphingosine 1-phosphate from mast cells independently of their degranulation. Participates in inflammatory response by allowing export of leukotriene C4 from leukotriene C4-synthesizing cells. Mediates ATP-dependent, GSH-independent cyclic GMP-AMP (cGAMP) export. Thus, by limiting intracellular cGAMP concentrations negatively regulates the cGAS-STING pathway. Exports S-geranylgeranyl-glutathione (GGG) in lymphoid cells and stromal compartments of lymphoid organs. ABCC1 (via extracellular transport) with GGT5 (via GGG catabolism) establish GGG gradients within lymphoid tissues to position P2RY8-positive lymphocytes at germinal centers in lymphoid follicles and restrict their chemotactic transmigration from blood vessels to the bone marrow parenchyma. Mediates basolateral export of GSH-conjugated R- and S-prostaglandin A2 diastereomers in polarized epithelial cells. This is Multidrug resistance-associated protein 1 from Homo sapiens (Human).